The sequence spans 348 residues: Rhodopsin (348 aa).

Met1 is modified (N-acetylmethionine). The Extracellular portion of the chain corresponds to 1-36 (MNGTEGPNFYVPYSNKSGVVRSPYEEPQYYLAEPWM). Residues Asn2 and Asn15 are each glycosylated (N-linked (GlcNAc...) asparagine). A helical membrane pass occupies residues 37 to 61 (FSCLAAYMFMLIVLGFPINFLTLYV). Topologically, residues 62-73 (TIQHKKLRTPLN) are cytoplasmic. A helical transmembrane segment spans residues 74–96 (YILLNLAVADLFMVICGFTTTLV). At 97–110 (TSLNGYFVFGTTGC) the chain is on the extracellular side. A disulfide bond links Cys110 and Cys187. A helical transmembrane segment spans residues 111–133 (LVEGFFATTGGEVALWALVVLAI). The 'Ionic lock' involved in activated form stabilization signature appears at 134-136 (ERY). At 134-152 (ERYIVVCKPMSNFRFGENH) the chain is on the cytoplasmic side. The chain crosses the membrane as a helical span at residues 153–173 (AIMGVAFTWIMALACSVPPIF). The Extracellular portion of the chain corresponds to 174 to 202 (GWSRYIPEGMQCSCGIDYYTLNPEFNNES). Glu201 provides a ligand contact to Zn(2+). A helical membrane pass occupies residues 203–224 (FVIYMFVVHFIIPLTVIFFCYG). At 225–252 (QLVFTVKEAAAQQQESATTQKAEKEVTR) the chain is on the cytoplasmic side. A helical membrane pass occupies residues 253 to 274 (MVIIMVIAFLICWVPYASVAFY). The Extracellular portion of the chain corresponds to 275 to 286 (IFTHQGSDFGPI). Zn(2+) is bound at residue Gln279. Residues 287–308 (FMTLPAFFAKSSSIYNPVIYIM) traverse the membrane as a helical segment. At Lys296 the chain carries N6-(retinylidene)lysine. The Cytoplasmic segment spans residues 309–348 (MNKQFRNCMITTLCCGKNPLGDDEASTTASKTETSQVAPA). Residues Cys322 and Cys323 are each lipidated (S-palmitoyl cysteine). An interaction with SAG region spans residues 330–348 (DDEASTTASKTETSQVAPA). Ser334 carries the post-translational modification Phosphoserine. A phosphothreonine mark is found at Thr335 and Thr336. Ser338 carries the post-translational modification Phosphoserine. A phosphothreonine mark is found at Thr340 and Thr342. The residue at position 343 (Ser343) is a Phosphoserine.

This sequence belongs to the G-protein coupled receptor 1 family. Opsin subfamily. As to quaternary structure, homodimer. May form a complex composed of RHO, GRK1 and RCVRN in a Ca(2+)-dependent manner; RCVRN prevents the interaction between GRK1 and RHO. Interacts with GRK1. Interacts (phosphorylated form) with SAG. Interacts with GNAT1. Interacts with GNAT3. SAG and G-proteins compete for a common binding site. Interacts with PRCD; the interaction promotes PRCD stability. Forms a complex with ASAP1 and ARF4. Forms a complex with ASAP1, RAB11A, Rabin8/RAB3IP, ARF4 and RAB11FIP3; the complex regulates Golgi-to-cilia rhodopsin/RHO transport in photoreceptors. In terms of processing, phosphorylated on some or all of the serine and threonine residues present in the C-terminal region. Contains one covalently linked retinal chromophore. Upon light absorption, the covalently bound 11-cis-retinal is converted to all-trans-retinal. After hydrolysis of the Schiff base and release of the covalently bound all-trans-retinal, active rhodopsin is regenerated by binding of a fresh molecule of 11-cis-retinal.

The protein resides in the membrane. It is found in the cell projection. Its subcellular location is the cilium. The protein localises to the photoreceptor outer segment. In terms of biological role, photoreceptor required for image-forming vision at low light intensity. Required for photoreceptor cell viability after birth. Light-induced isomerization of 11-cis to all-trans retinal triggers a conformational change that activates signaling via G-proteins. Subsequent receptor phosphorylation mediates displacement of the bound G-protein alpha subunit by the arrestin SAG and terminates signaling. In Sminthopsis crassicaudata (Fat-tailed dunnart), this protein is Rhodopsin (RHO).